The chain runs to 274 residues: Undecaprenyl-diphosphatase 1 (274 aa).

The next 8 membrane-spanning stretches (helical) occupy residues 4–24 (LLLL…FLPI), 45–65 (SAVF…YEYW), 84–104 (HLAI…LSFG), 111–131 (LFND…IMWI), 146–166 (IGLK…IPGT), 186–206 (ATEF…LLDL), 217–237 (FDWS…LLLI), and 249–269 (FMVF…FAYT).

This sequence belongs to the UppP family.

Its subcellular location is the cell inner membrane. It catalyses the reaction di-trans,octa-cis-undecaprenyl diphosphate + H2O = di-trans,octa-cis-undecaprenyl phosphate + phosphate + H(+). Catalyzes the dephosphorylation of undecaprenyl diphosphate (UPP). Confers resistance to bacitracin. This is Undecaprenyl-diphosphatase 1 from Acinetobacter baylyi (strain ATCC 33305 / BD413 / ADP1).